A 347-amino-acid polypeptide reads, in one-letter code: MDLQAQLEELKTKTQEALKQLNGDHSKELQELRVAVLGKRGTLTELLKGLKDLSNDLRPVVGKQVNELRDFLTQAFEEQAKVVEAAKIQAKLDSESIDVTLPGRQMKQGYRHVLTQISEEIEDIFLGMGFQIVDGFEVEKDYYNFERMNLPKDHPARDMQDTFYITEDILLRTHTSPVQARTLDQHDFSKGPLKMISPGRVFRRDTDDATHSHQFHQIEGLVVGKSISMGDLKGTLEMIIKKMFGKERKIRLRPSYFPFTEPSVEVDVSCFKCGGKGCNVCKKTGWIEILGAGMVHPSVLEMSGVNAQEYSGFAFGLGQERIAMLRYGINDIRGFYQGDSRFSKQFK.

E261 is a binding site for Mg(2+).

This sequence belongs to the class-II aminoacyl-tRNA synthetase family. Phe-tRNA synthetase alpha subunit type 1 subfamily. In terms of assembly, tetramer of two alpha and two beta subunits. It depends on Mg(2+) as a cofactor.

The protein localises to the cytoplasm. The catalysed reaction is tRNA(Phe) + L-phenylalanine + ATP = L-phenylalanyl-tRNA(Phe) + AMP + diphosphate + H(+). The protein is Phenylalanine--tRNA ligase alpha subunit of Streptococcus equi subsp. zooepidemicus (strain MGCS10565).